The chain runs to 403 residues: Na(+)-translocating NADH-quinone reductase subunit B (403 aa).

The next 9 membrane-spanning stretches (helical) occupy residues 56–76, 121–141, 164–184, 225–245, 260–280, 287–307, 312–332, 348–368, and 371–391; these read MMII…YNVG, AYFL…EVLF, LPPS…VVLG, GFAG…NILG, GSMG…LLLT, IVAG…AIGS, MFAM…GMIF, WLFG…NPAF, and GMML…HFVV. Residue Thr230 is modified to FMN phosphoryl threonine.

It belongs to the NqrB/RnfD family. In terms of assembly, composed of six subunits; NqrA, NqrB, NqrC, NqrD, NqrE and NqrF. Requires FMN as cofactor.

The protein localises to the cell inner membrane. It catalyses the reaction a ubiquinone + n Na(+)(in) + NADH + H(+) = a ubiquinol + n Na(+)(out) + NAD(+). NQR complex catalyzes the reduction of ubiquinone-1 to ubiquinol by two successive reactions, coupled with the transport of Na(+) ions from the cytoplasm to the periplasm. NqrA to NqrE are probably involved in the second step, the conversion of ubisemiquinone to ubiquinol. The chain is Na(+)-translocating NADH-quinone reductase subunit B from Pseudomonas paraeruginosa (strain DSM 24068 / PA7) (Pseudomonas aeruginosa (strain PA7)).